The chain runs to 429 residues: MGKNVVVLGSQWGDEGKGKIVDLLTEKASAVARFQGGHNAGHTLVVDGKTTILHLIPSGILREGVTCFIGNGVVLAPDALLKEMKNLEDNNVPVRERLRISPNCPLIMPYHVALDQAREAKRGSGKIGTTGRGIGPAYEDKVARRAIKLADLFRDDLEEKLRNLIEYHNFQLTQYYKVEAIDFDETLKLCQEWKEAIRGMVTDVTEDLNQLRLAGKNLMFEGAQGTLLDIDHGTYPFVTSSSVTAGGVSTGTGIGPLYLDYVLGITKAYTTRVGSGPFPTELFDDVGAHLAKVGHEFGATTGRARRCGWFDAEALRRAVVLNSMSGICLTKLDVLDGLEELLIGVGYNLPETECAGAHDAEFYESVTPKYETLQGWSESTVGITNYDELPENAKKYIKRIEVLIGCPIDIISTGPDREETIVLRDPYDA.

GTP-binding positions include 13–19 (GDEGKGK) and 41–43 (GHT). Aspartate 14 acts as the Proton acceptor in catalysis. Residues aspartate 14 and glycine 41 each contribute to the Mg(2+) site. Residues 14–17 (DEGK), 39–42 (NAGH), threonine 130, arginine 144, glutamine 224, threonine 239, and arginine 303 contribute to the IMP site. Catalysis depends on histidine 42, which acts as the Proton donor. 299 to 305 (ATTGRAR) is a substrate binding site. GTP contacts are provided by residues arginine 305, 331-333 (KLD), and 412-414 (STG).

Belongs to the adenylosuccinate synthetase family. In terms of assembly, homodimer. Mg(2+) is required as a cofactor.

It localises to the cytoplasm. It catalyses the reaction IMP + L-aspartate + GTP = N(6)-(1,2-dicarboxyethyl)-AMP + GDP + phosphate + 2 H(+). The protein operates within purine metabolism; AMP biosynthesis via de novo pathway; AMP from IMP: step 1/2. Plays an important role in the de novo pathway of purine nucleotide biosynthesis. Catalyzes the first committed step in the biosynthesis of AMP from IMP. The sequence is that of Adenylosuccinate synthetase from Psychrobacter arcticus (strain DSM 17307 / VKM B-2377 / 273-4).